The sequence spans 224 residues: GrpE protein homolog 2, mitochondrial (224 aa).

The transit peptide at 1-31 directs the protein to the mitochondrion; it reads MAARSLWAVQRLQRLLASGAMSESRGWLHPF. Residue Lys141 is modified to N6-acetyllysine.

The protein belongs to the GrpE family. As to quaternary structure, probable component of the PAM complex at least composed of a mitochondrial HSP70 protein, GRPEL1 or GRPEL2, TIMM44, TIMM16/PAM16 and TIMM14/DNAJC19. As to expression, ubiquitous.

The protein localises to the mitochondrion matrix. Essential component of the PAM complex, a complex required for the translocation of transit peptide-containing proteins from the inner membrane into the mitochondrial matrix in an ATP-dependent manner. Seems to control the nucleotide-dependent binding of mitochondrial HSP70 to substrate proteins. Stimulates ATPase activity of mt-HSP70. May also serve to modulate the interconversion of oligomeric (inactive) and monomeric (active) forms of mt-HSP70. The sequence is that of GrpE protein homolog 2, mitochondrial (Grpel2) from Mus musculus (Mouse).